Reading from the N-terminus, the 399-residue chain is Elongation factor Tu (399 aa).

Residues 10-209 (KPHVNIGTIG…EVDAYIPTPV (200 aa)) enclose the tr-type G domain. Residues 19–26 (GHVDHGKT) form a G1 region. A GTP-binding site is contributed by 19–26 (GHVDHGKT). Thr26 lines the Mg(2+) pocket. Residues 60-64 (GITIA) are G2. The tract at residues 81 to 84 (DCPG) is G3. GTP-binding positions include 81–85 (DCPGH) and 136–139 (NKQD). Residues 136–139 (NKQD) form a G4 region. Positions 174–176 (SAL) are G5.

This sequence belongs to the TRAFAC class translation factor GTPase superfamily. Classic translation factor GTPase family. EF-Tu/EF-1A subfamily. Monomer.

It is found in the cytoplasm. The enzyme catalyses GTP + H2O = GDP + phosphate + H(+). GTP hydrolase that promotes the GTP-dependent binding of aminoacyl-tRNA to the A-site of ribosomes during protein biosynthesis. The chain is Elongation factor Tu from Helicobacter acinonychis (strain Sheeba).